The primary structure comprises 550 residues: Methionine--tRNA ligase (550 aa).

The short motif at 13–23 is the 'HIGH' region element; the sequence is PYANGPLHFGH. Positions 145, 148, 158, and 161 each coordinate Zn(2+). Positions 331–335 match the 'KMSKS' region motif; it reads QFSKS. ATP is bound at residue K334.

The protein belongs to the class-I aminoacyl-tRNA synthetase family. MetG type 1 subfamily. As to quaternary structure, monomer. It depends on Zn(2+) as a cofactor.

It is found in the cytoplasm. The enzyme catalyses tRNA(Met) + L-methionine + ATP = L-methionyl-tRNA(Met) + AMP + diphosphate. Functionally, is required not only for elongation of protein synthesis but also for the initiation of all mRNA translation through initiator tRNA(fMet) aminoacylation. The sequence is that of Methionine--tRNA ligase (metG) from Chlamydia muridarum (strain MoPn / Nigg).